A 558-amino-acid polypeptide reads, in one-letter code: Putative transposase for insertion sequence IS1162 (558 aa).

The HTH IS408-type domain maps to 11–93 (IKECLRLKFE…PDLITIHREL (83 aa)). Residues 23 to 44 (LSHEKIARALQLSKGVVSKYVT) constitute a DNA-binding region (H-T-H motif). An Integrase catalytic domain is found at 139–336 (QQHRAGEKLF…HPYEVVTFKR (198 aa)). Residues 486–558 (QGLDQQPLPK…AAGQPQPELR (73 aa)) are disordered.

Belongs to the transposase IS21/IS408/IS1162 family.

In terms of biological role, required for the transposition of the insertion element. The protein is Putative transposase for insertion sequence IS1162 of Pseudomonas fluorescens.